Reading from the N-terminus, the 252-residue chain is Adenosylcobinamide-GDP ribazoletransferase (252 aa).

7 helical membrane passes run 4–24, 38–58, 60–80, 113–133, 141–161, 190–210, and 232–252; these read LFKGLMMSLSMFTIIPMPYVE, PIIGLIVGCVWFLGYKLINYL, ISIVLKSALIMIIPFIITGML, FSVISVIILFFIQFGAVHSFL, ILMFLPIISRNIVAYFFITII, LVCILFGIILGYIGIVILLIV, and VAGFSLVVGELVGLFSACLFT.

It belongs to the CobS family. It depends on Mg(2+) as a cofactor.

It localises to the cell membrane. It carries out the reaction alpha-ribazole + adenosylcob(III)inamide-GDP = adenosylcob(III)alamin + GMP + H(+). The catalysed reaction is alpha-ribazole 5'-phosphate + adenosylcob(III)inamide-GDP = adenosylcob(III)alamin 5'-phosphate + GMP + H(+). It functions in the pathway cofactor biosynthesis; adenosylcobalamin biosynthesis; adenosylcobalamin from cob(II)yrinate a,c-diamide: step 7/7. In terms of biological role, joins adenosylcobinamide-GDP and alpha-ribazole to generate adenosylcobalamin (Ado-cobalamin). Also synthesizes adenosylcobalamin 5'-phosphate from adenosylcobinamide-GDP and alpha-ribazole 5'-phosphate. This chain is Adenosylcobinamide-GDP ribazoletransferase, found in Clostridium botulinum (strain Eklund 17B / Type B).